The following is a 549-amino-acid chain: Chaperonin GroEL (549 aa).

ATP is bound by residues T30–P33, K51, D87–T91, G415, and D496.

The protein belongs to the chaperonin (HSP60) family. In terms of assembly, forms a cylinder of 14 subunits composed of two heptameric rings stacked back-to-back. Interacts with the co-chaperonin GroES.

The protein localises to the cytoplasm. The catalysed reaction is ATP + H2O + a folded polypeptide = ADP + phosphate + an unfolded polypeptide.. In terms of biological role, together with its co-chaperonin GroES, plays an essential role in assisting protein folding. The GroEL-GroES system forms a nano-cage that allows encapsulation of the non-native substrate proteins and provides a physical environment optimized to promote and accelerate protein folding. In Prosthecochloris aestuarii (strain DSM 271 / SK 413), this protein is Chaperonin GroEL.